Reading from the N-terminus, the 380-residue chain is Epoxyqueuosine reductase (380 aa).

D134 acts as the Proton donor in catalysis. One can recognise a 4Fe-4S ferredoxin-type 1 domain in the interval 178-208 (FPPDKPIEDQCGGCTKCIDICPTGALIQGGQ). [4Fe-4S] cluster-binding residues include C188, C191, C194, C198, C214, C240, C243, and C247. The 4Fe-4S ferredoxin-type 2 domain maps to 226–258 (PEEYRDKIGNRIYGCDTCQTVCPKNKGMDFHNH).

Belongs to the QueG family. As to quaternary structure, monomer. Cob(II)alamin serves as cofactor. The cofactor is [4Fe-4S] cluster.

Its subcellular location is the cytoplasm. It catalyses the reaction epoxyqueuosine(34) in tRNA + AH2 = queuosine(34) in tRNA + A + H2O. The protein operates within tRNA modification; tRNA-queuosine biosynthesis. In terms of biological role, catalyzes the conversion of epoxyqueuosine (oQ) to queuosine (Q), which is a hypermodified base found in the wobble positions of tRNA(Asp), tRNA(Asn), tRNA(His) and tRNA(Tyr). The polypeptide is Epoxyqueuosine reductase (Bacillus cereus (strain ATCC 14579 / DSM 31 / CCUG 7414 / JCM 2152 / NBRC 15305 / NCIMB 9373 / NCTC 2599 / NRRL B-3711)).